The primary structure comprises 189 residues: Potassium-transporting ATPase KdpC subunit (189 aa).

Residues 10 to 30 form a helical membrane-spanning segment; it reads VIFAMLTLICGVIYPYAITGI.

The protein belongs to the KdpC family. As to quaternary structure, the system is composed of three essential subunits: KdpA, KdpB and KdpC.

It localises to the cell inner membrane. Functionally, part of the high-affinity ATP-driven potassium transport (or Kdp) system, which catalyzes the hydrolysis of ATP coupled with the electrogenic transport of potassium into the cytoplasm. This subunit acts as a catalytic chaperone that increases the ATP-binding affinity of the ATP-hydrolyzing subunit KdpB by the formation of a transient KdpB/KdpC/ATP ternary complex. The sequence is that of Potassium-transporting ATPase KdpC subunit from Janthinobacterium sp. (strain Marseille) (Minibacterium massiliensis).